The following is a 235-amino-acid chain: BPI fold-containing family A member 2 (235 aa).

Residues 1 to 20 (MFQLGSLVVLCGLLIGTSES) form the signal peptide. Cys-161 and Cys-204 are oxidised to a cystine.

It belongs to the BPI/LBP/Plunc superfamily. Plunc family. In terms of tissue distribution, expressed in parotid, submandibular and sublingual glands.

The protein localises to the secreted. In terms of biological role, has strong antibacterial activity against P.aeruginosa. The polypeptide is BPI fold-containing family A member 2 (Bpifa2) (Rattus norvegicus (Rat)).